Consider the following 355-residue polypeptide: Probable butyrate kinase (355 aa).

The protein belongs to the acetokinase family.

It localises to the cytoplasm. It carries out the reaction butanoate + ATP = butanoyl phosphate + ADP. This Clostridium botulinum (strain Alaska E43 / Type E3) protein is Probable butyrate kinase.